Here is a 313-residue protein sequence, read N- to C-terminus: 4-hydroxy-3-methylbut-2-enyl diphosphate reductase (313 aa).

Residue C12 participates in [4Fe-4S] cluster binding. H41 and H74 together coordinate (2E)-4-hydroxy-3-methylbut-2-enyl diphosphate. Residues H41 and H74 each contribute to the dimethylallyl diphosphate site. 2 residues coordinate isopentenyl diphosphate: H41 and H74. C96 is a binding site for [4Fe-4S] cluster. H124 provides a ligand contact to (2E)-4-hydroxy-3-methylbut-2-enyl diphosphate. H124 contributes to the dimethylallyl diphosphate binding site. Residue H124 participates in isopentenyl diphosphate binding. The active-site Proton donor is the E126. T167 lines the (2E)-4-hydroxy-3-methylbut-2-enyl diphosphate pocket. C197 is a binding site for [4Fe-4S] cluster. The (2E)-4-hydroxy-3-methylbut-2-enyl diphosphate site is built by S225, S226, N227, and S269. 4 residues coordinate dimethylallyl diphosphate: S225, S226, N227, and S269. S225, S226, N227, and S269 together coordinate isopentenyl diphosphate.

It belongs to the IspH family. [4Fe-4S] cluster serves as cofactor.

It catalyses the reaction isopentenyl diphosphate + 2 oxidized [2Fe-2S]-[ferredoxin] + H2O = (2E)-4-hydroxy-3-methylbut-2-enyl diphosphate + 2 reduced [2Fe-2S]-[ferredoxin] + 2 H(+). It carries out the reaction dimethylallyl diphosphate + 2 oxidized [2Fe-2S]-[ferredoxin] + H2O = (2E)-4-hydroxy-3-methylbut-2-enyl diphosphate + 2 reduced [2Fe-2S]-[ferredoxin] + 2 H(+). It participates in isoprenoid biosynthesis; dimethylallyl diphosphate biosynthesis; dimethylallyl diphosphate from (2E)-4-hydroxy-3-methylbutenyl diphosphate: step 1/1. It functions in the pathway isoprenoid biosynthesis; isopentenyl diphosphate biosynthesis via DXP pathway; isopentenyl diphosphate from 1-deoxy-D-xylulose 5-phosphate: step 6/6. In terms of biological role, catalyzes the conversion of 1-hydroxy-2-methyl-2-(E)-butenyl 4-diphosphate (HMBPP) into a mixture of isopentenyl diphosphate (IPP) and dimethylallyl diphosphate (DMAPP). Acts in the terminal step of the DOXP/MEP pathway for isoprenoid precursor biosynthesis. The chain is 4-hydroxy-3-methylbut-2-enyl diphosphate reductase from Baumannia cicadellinicola subsp. Homalodisca coagulata.